A 361-amino-acid chain; its full sequence is Peptide chain release factor 1 (361 aa).

An N5-methylglutamine modification is found at Gln237. Basic and acidic residues predominate over residues Glu286–Arg296. Residues Glu286–Arg305 form a disordered region.

Belongs to the prokaryotic/mitochondrial release factor family. In terms of processing, methylated by PrmC. Methylation increases the termination efficiency of RF1.

Its subcellular location is the cytoplasm. Peptide chain release factor 1 directs the termination of translation in response to the peptide chain termination codons UAG and UAA. The protein is Peptide chain release factor 1 of Shewanella pealeana (strain ATCC 700345 / ANG-SQ1).